Consider the following 131-residue polypeptide: Small ribosomal subunit protein uS8 (131 aa).

The protein belongs to the universal ribosomal protein uS8 family. In terms of assembly, part of the 30S ribosomal subunit. Contacts proteins S5 and S12.

Functionally, one of the primary rRNA binding proteins, it binds directly to 16S rRNA central domain where it helps coordinate assembly of the platform of the 30S subunit. This is Small ribosomal subunit protein uS8 from Aromatoleum aromaticum (strain DSM 19018 / LMG 30748 / EbN1) (Azoarcus sp. (strain EbN1)).